The chain runs to 72 residues: DNA-directed RNA polymerase subunit omega (72 aa).

Belongs to the RNA polymerase subunit omega family. The RNAP catalytic core consists of 2 alpha, 1 beta, 1 beta' and 1 omega subunit. When a sigma factor is associated with the core the holoenzyme is formed, which can initiate transcription.

The catalysed reaction is RNA(n) + a ribonucleoside 5'-triphosphate = RNA(n+1) + diphosphate. In terms of biological role, promotes RNA polymerase assembly. Latches the N- and C-terminal regions of the beta' subunit thereby facilitating its interaction with the beta and alpha subunits. The polypeptide is DNA-directed RNA polymerase subunit omega (Clostridium botulinum (strain Loch Maree / Type A3)).